We begin with the raw amino-acid sequence, 189 residues long: Elongation factor P (189 aa).

Belongs to the elongation factor P family.

Its subcellular location is the cytoplasm. It functions in the pathway protein biosynthesis; polypeptide chain elongation. Its function is as follows. Involved in peptide bond synthesis. Stimulates efficient translation and peptide-bond synthesis on native or reconstituted 70S ribosomes in vitro. Probably functions indirectly by altering the affinity of the ribosome for aminoacyl-tRNA, thus increasing their reactivity as acceptors for peptidyl transferase. This chain is Elongation factor P, found in Ehrlichia ruminantium (strain Gardel).